The primary structure comprises 465 residues: GTPase Der (465 aa).

EngA-type G domains are found at residues 3–167 (PLVA…PEEG) and 179–352 (IRIA…ESAN). Residues 9-16 (GRPNVGKS), 57-61 (DTGGI), 119-122 (NKID), 185-192 (GRPNVGKS), 232-236 (DTAGL), and 297-300 (NKWD) contribute to the GTP site. One can recognise a KH-like domain in the interval 353-437 (KTFTTSEVNK…PVSFIFREGT (85 aa)).

Belongs to the TRAFAC class TrmE-Era-EngA-EngB-Septin-like GTPase superfamily. EngA (Der) GTPase family. Associates with the 50S ribosomal subunit.

GTPase that plays an essential role in the late steps of ribosome biogenesis. The protein is GTPase Der of Stenotrophomonas maltophilia (strain K279a).